We begin with the raw amino-acid sequence, 426 residues long: Gamma-glutamyl phosphate reductase (426 aa).

Belongs to the gamma-glutamyl phosphate reductase family.

The protein localises to the cytoplasm. The catalysed reaction is L-glutamate 5-semialdehyde + phosphate + NADP(+) = L-glutamyl 5-phosphate + NADPH + H(+). It participates in amino-acid biosynthesis; L-proline biosynthesis; L-glutamate 5-semialdehyde from L-glutamate: step 2/2. Functionally, catalyzes the NADPH-dependent reduction of L-glutamate 5-phosphate into L-glutamate 5-semialdehyde and phosphate. The product spontaneously undergoes cyclization to form 1-pyrroline-5-carboxylate. The chain is Gamma-glutamyl phosphate reductase from Cupriavidus metallidurans (strain ATCC 43123 / DSM 2839 / NBRC 102507 / CH34) (Ralstonia metallidurans).